The primary structure comprises 191 residues: Probable DNA-directed RNA polymerase subunit delta (191 aa).

In terms of domain architecture, HTH HARE-type spans L14–W83. The disordered stretch occupies residues E119–L191.

RNAP is composed of a core of 2 alpha, a beta and a beta' subunits. The core is associated with a delta subunit and one of several sigma factors.

In terms of biological role, participates in both the initiation and recycling phases of transcription. In the presence of the delta subunit, RNAP displays an increased specificity of transcription, a decreased affinity for nucleic acids, and an increased efficiency of RNA synthesis because of enhanced recycling. The protein is Probable DNA-directed RNA polymerase subunit delta of Streptococcus pyogenes serotype M6 (strain ATCC BAA-946 / MGAS10394).